A 244-amino-acid chain; its full sequence is Small ribosomal subunit protein uS3 (244 aa).

The region spanning 39–110 is the KH type-2 domain; it reads IRNFIQKKYS…QVRINVVEVE (72 aa). Positions 221–244 are disordered; that stretch reads GAIPRRKGSRKPQQFEDRSSNENS. The segment covering 233–244 has biased composition (basic and acidic residues); the sequence is QQFEDRSSNENS.

Belongs to the universal ribosomal protein uS3 family. Part of the 30S ribosomal subunit. Forms a tight complex with proteins S10 and S14.

Binds the lower part of the 30S subunit head. Binds mRNA in the 70S ribosome, positioning it for translation. The chain is Small ribosomal subunit protein uS3 from Prochlorococcus marinus (strain MIT 9515).